Consider the following 550-residue polypeptide: Nucleoside hydrolase 4 (550 aa).

This sequence belongs to the IUNH family.

The protein resides in the cytoplasm. Its function is as follows. May be involved in the degradation of nucleosides. This is Nucleoside hydrolase 4 from Arabidopsis thaliana (Mouse-ear cress).